The following is a 134-amino-acid chain: ATP synthase epsilon chain (134 aa).

Belongs to the ATPase epsilon chain family. In terms of assembly, F-type ATPases have 2 components, CF(1) - the catalytic core - and CF(0) - the membrane proton channel. CF(1) has five subunits: alpha(3), beta(3), gamma(1), delta(1), epsilon(1). CF(0) has three main subunits: a, b and c.

The protein resides in the cell membrane. Produces ATP from ADP in the presence of a proton gradient across the membrane. This chain is ATP synthase epsilon chain (atpC), found in Priestia megaterium (strain ATCC 12872 / QMB1551) (Bacillus megaterium).